A 361-amino-acid polypeptide reads, in one-letter code: POU domain, class 3, transcription factor 4-A (361 aa).

Disordered regions lie at residues 100 to 131, 150 to 189, and 333 to 361; these read HVNH…GQPI, LTPP…EETP, and EKRM…CNEL. Residues 119–131 are compositionally biased toward polar residues; the sequence is AHNSSLTSSGQPI. The span at 165–183 shows a compositional bias: basic and acidic residues; it reads VLREPNDHVDLGSHHCQDH. Residues 186 to 260 form the POU-specific domain; the sequence is EETPTSDELE…LLNKWLEEAD (75 aa). The segment at residues 278 to 337 is a DNA-binding region (homeobox); the sequence is KRKKRTSIEVSVKGVLETHFLKCPKPAALEITSLADSLQLEKEVVRVWFCNRRQKEKRMT.

This sequence belongs to the POU transcription factor family. Class-3 subfamily. In terms of tissue distribution, from embryonic stage 10, expressed in the Spemann's organizer. During gastrulation, expressed in both the involuting mesoderm and the overlying neuroectoderm. During the neural plate and neural fold stages, expressed in the entire neuroectoderm with expression in discrete regions of the developing nervous system persisting at later stages. Transiently expressed in the pronephros from stages 24-32. In adults, expressed in the kidney and brain.

Its subcellular location is the nucleus. Its function is as follows. Transcriptional activator. Induces neural-specific gene expression to act as a key regulator of neural differentiation. The sequence is that of POU domain, class 3, transcription factor 4-A (pou3f4-a) from Xenopus laevis (African clawed frog).